The primary structure comprises 138 residues: NADH dehydrogenase [ubiquinone] iron-sulfur protein 2, mitochondrial (138 aa).

The protein belongs to the complex I 49 kDa subunit family. Core subunit of respiratory chain NADH dehydrogenase (Complex I) which is composed of 45 different subunits. Component of the iron-sulfur (IP) fragment of the enzyme. Interacts with NDUFAF3. Interacts with NDUFAF7. Interacts with CERS2. The cofactor is [4Fe-4S] cluster. Dimethylation at Arg-118 by NDUFAF7 takes place after NDUFS2 assembles into the complex I, leading to stabilize the early intermediate complex.

The protein localises to the mitochondrion inner membrane. The enzyme catalyses a ubiquinone + NADH + 5 H(+)(in) = a ubiquinol + NAD(+) + 4 H(+)(out). Functionally, core subunit of the mitochondrial membrane respiratory chain NADH dehydrogenase (Complex I) which catalyzes electron transfer from NADH through the respiratory chain, using ubiquinone as an electron acceptor. Essential for the catalytic activity and assembly of complex I. Redox-sensitive, critical component of the oxygen-sensing pathway in the pulmonary vasculature which plays a key role in acute pulmonary oxygen-sensing and hypoxic pulmonary vasoconstriction. Plays an important role in carotid body sensing of hypoxia. Essential for glia-like neural stem and progenitor cell proliferation, differentiation and subsequent oligodendrocyte or neuronal maturation. The protein is NADH dehydrogenase [ubiquinone] iron-sulfur protein 2, mitochondrial of Mesocricetus auratus (Golden hamster).